The chain runs to 72 residues: MKMMIAVFVSILLLMFSLSSTAMGMETEQQNMEERADMDFTGIAESIIKKIKETNAKPPARFDPATFGENED.

The first 24 residues, 1–24 (MKMMIAVFVSILLLMFSLSSTAMG), serve as a signal peptide directing secretion. 2 consecutive propeptides follow at residues 25 to 35 (METEQQNMEER) and 61 to 72 (RFDPATFGENED).

It belongs to the non-disulfide-bridged peptide (NDBP) superfamily. Expressed by the venom gland.

It is found in the secreted. Its function is as follows. Potentiates the hypotensive action of bradykinin (BK) in normotensive rats, and induces a vasorelaxant effect in mesenteric artery rings that is induced by endothelium-dependent release of nitric oxide (NO). Does not inhibit angiotensin converting enzyme (ACE). Shows neither hemolytic activity nor cytotoxicity to normal and cancer cells. Shows moderate antimicrobial activity against the fungi Candida albicans and the filamentous fungus Trichophyton rubrum, as well as against the bacteria C.albicans (MIC=128 ug/mL), C.tropicalis (MIC=128 ug/mL) and Aspergillus flavus (MIC=128 ug/mL). Has no antimicrobial activity against S.aureus, S.epidermidis and P.aeruginosa. In Tityus stigmurus (Brazilian scorpion), this protein is Hypotensin.